The primary structure comprises 292 residues: Acetylglutamate kinase (292 aa).

Substrate-binding positions include 64-65 (GG), Arg86, and Asn190.

This sequence belongs to the acetylglutamate kinase family. ArgB subfamily.

The protein resides in the cytoplasm. The catalysed reaction is N-acetyl-L-glutamate + ATP = N-acetyl-L-glutamyl 5-phosphate + ADP. The protein operates within amino-acid biosynthesis; L-arginine biosynthesis; N(2)-acetyl-L-ornithine from L-glutamate: step 2/4. In terms of biological role, catalyzes the ATP-dependent phosphorylation of N-acetyl-L-glutamate. This Geotalea daltonii (strain DSM 22248 / JCM 15807 / FRC-32) (Geobacter daltonii) protein is Acetylglutamate kinase.